The chain runs to 476 residues: Proline--tRNA ligase 2 (476 aa).

It belongs to the class-II aminoacyl-tRNA synthetase family. ProS type 3 subfamily. In terms of assembly, homodimer.

The protein localises to the cytoplasm. The enzyme catalyses tRNA(Pro) + L-proline + ATP = L-prolyl-tRNA(Pro) + AMP + diphosphate. Its function is as follows. Catalyzes the attachment of proline to tRNA(Pro) in a two-step reaction: proline is first activated by ATP to form Pro-AMP and then transferred to the acceptor end of tRNA(Pro). The protein is Proline--tRNA ligase 2 of Bacillus cereus (strain ATCC 14579 / DSM 31 / CCUG 7414 / JCM 2152 / NBRC 15305 / NCIMB 9373 / NCTC 2599 / NRRL B-3711).